The chain runs to 279 residues: Methyltransferase ausD (279 aa).

Residues 124 to 125 (DI) and 152 to 153 (DV) each bind S-adenosyl-L-methionine.

Belongs to the class I-like SAM-binding methyltransferase superfamily. Homodimer.

The protein operates within secondary metabolite biosynthesis; terpenoid biosynthesis. Functionally, methyltransferase; part of the gene cluster A that mediates the biosynthesis of the fungal meroterpenoid acetoxydehydroaustin. The first step of the pathway is the synthesis of 3,5-dimethylorsellinic acid by the polyketide synthase ausA. 3,5-dimethylorsellinic acid is then prenylated by the polyprenyl transferase ausN. Further epoxidation by the FAD-dependent monooxygenase ausM and cyclization by the probable terpene cyclase ausL lead to the formation of protoaustinoid A. Protoaustinoid A is then oxidized to spiro-lactone preaustinoid A3 by the combined action of the FAD-binding monooxygenases ausB and ausC, and the dioxygenase ausE. Acid-catalyzed keto-rearrangement and ring contraction of the tetraketide portion of preaustinoid A3 by ausJ lead to the formation of preaustinoid A4. The aldo-keto reductase ausK, with the help of ausH, is involved in the next step by transforming preaustinoid A4 into isoaustinone which is in turn hydroxylated by the P450 monooxygenase ausI to form austinolide. The cytochrome P450 monooxygenase ausG then modifies austinolide to austinol. Austinol is further acetylated to austin by the O-acetyltransferase ausP, which spontaneously changes to dehydroaustin. The cytochrome P450 monooxygenase then converts dehydroaustin is into 7-dehydrodehydroaustin. The hydroxylation catalyzed by ausR permits the second O-acetyltransferase ausQ to add an additional acetyl group to the molecule, leading to the formation of acetoxydehydroaustin. Due to genetic rearrangements of the clusters and the subsequent loss of some enzymes, the end product of the Penicillium brasilianum austinoid biosynthesis clusters is acetoxydehydroaustin. This Penicillium brasilianum protein is Methyltransferase ausD.